A 229-amino-acid chain; its full sequence is 5'-methylthioadenosine/S-adenosylhomocysteine nucleosidase (229 aa).

The active-site Proton acceptor is the Glu-12. Substrate contacts are provided by residues Gly-78, Ile-152, and 173 to 174 (ME). The active-site Proton donor is the Asp-197.

It belongs to the PNP/UDP phosphorylase family. MtnN subfamily.

The catalysed reaction is S-adenosyl-L-homocysteine + H2O = S-(5-deoxy-D-ribos-5-yl)-L-homocysteine + adenine. The enzyme catalyses S-methyl-5'-thioadenosine + H2O = 5-(methylsulfanyl)-D-ribose + adenine. It catalyses the reaction 5'-deoxyadenosine + H2O = 5-deoxy-D-ribose + adenine. The protein operates within amino-acid biosynthesis; L-methionine biosynthesis via salvage pathway; S-methyl-5-thio-alpha-D-ribose 1-phosphate from S-methyl-5'-thioadenosine (hydrolase route): step 1/2. Functionally, catalyzes the irreversible cleavage of the glycosidic bond in both 5'-methylthioadenosine (MTA) and S-adenosylhomocysteine (SAH/AdoHcy) to adenine and the corresponding thioribose, 5'-methylthioribose and S-ribosylhomocysteine, respectively. Also cleaves 5'-deoxyadenosine, a toxic by-product of radical S-adenosylmethionine (SAM) enzymes, into 5-deoxyribose and adenine. The polypeptide is 5'-methylthioadenosine/S-adenosylhomocysteine nucleosidase (Mannheimia succiniciproducens (strain KCTC 0769BP / MBEL55E)).